Here is a 446-residue protein sequence, read N- to C-terminus: Iroquois homeobox protein 5a (446 aa).

A DNA-binding region (homeobox) is located at residues 117-173 (NATRDATATLKAWLNEHRKNPYPTKGEKIMLAIITKMTLTQVSTWFANARRRLKKEN). The interval 175 to 312 (MTWTPRNRSE…IHSPPSAPKP (138 aa)) is disordered. The segment covering 184 to 201 (EDEEEDENIDLEKNDDDE) has biased composition (acidic residues). 2 stretches are compositionally biased toward basic and acidic residues: residues 202–220 (PNKP…DHKL) and 227–258 (PCDR…RTDL). Composition is skewed to polar residues over residues 264 to 274 (KPTTSSPSVLQ) and 293 to 303 (STGNSNVTSVI).

It belongs to the TALE/IRO homeobox family.

It localises to the nucleus. Transcription factor. Binds to consensus iroquois binding site (IBS) motifs 5'-ACANNTGT-3' or 5'-ACANNNTGT-3' in regulatory elements of target genes. Required, together with irx7, for hyoid joint formation; they act cell autonomously to repress expression of cartilage matrix genes, such as collagen col2a1a, within immature chondrocytes of the joint interzone. May compete with or modify Sox9a activity, thereby reducing Sox9a-mediated activation of col2a1a. Probably acts in the developing hyoid joint downstream of Bmp signaling. In concert with irx6a, plays a role in visual performance. The polypeptide is Iroquois homeobox protein 5a (irx5a) (Danio rerio (Zebrafish)).